The following is a 1054-amino-acid chain: Probable sucrose-phosphate synthase 1 (1054 aa).

A compositionally biased stretch (basic and acidic residues) spans 104–115 (RLERERGRREAV). 3 disordered regions span residues 104–125 (RLER…LSEG), 674–693 (LRNE…SDSL), and 708–727 (DGDK…DDRA).

Belongs to the glycosyltransferase 1 family. As to quaternary structure, homodimer or homotetramer.

It catalyses the reaction beta-D-fructose 6-phosphate + UDP-alpha-D-glucose = sucrose 6(F)-phosphate + UDP + H(+). It functions in the pathway glycan biosynthesis; sucrose biosynthesis; sucrose from D-fructose 6-phosphate and UDP-alpha-D-glucose: step 1/2. With respect to regulation, activity is regulated by phosphorylation and moderated by concentration of metabolites and light. In terms of biological role, plays a role in photosynthetic sucrose synthesis by catalyzing the rate-limiting step of sucrose biosynthesis from UDP-glucose and fructose- 6-phosphate. Involved in the regulation of carbon partitioning in the leaves of plants. May regulate the synthesis of sucrose and therefore play a major role as a limiting factor in the export of photoassimilates out of the leaf. Plays a role for sucrose availability that is essential for plant growth and fiber elongation. This is Probable sucrose-phosphate synthase 1 (SPS1) from Craterostigma plantagineum (Blue gem).